The sequence spans 505 residues: uncharacterized protein (505 aa).

The first 19 residues, 1–19, serve as a signal peptide directing secretion; sequence MILFTAIILVASVVHVVVS. Topologically, residues 20–483 are extracellular; that stretch reads SPQQCYYCVE…EQPNSAPRGE (464 aa). A helical transmembrane segment spans residues 484-504; that stretch reads IHQLFRCTFVAVFIVFACFIV. A topological domain (cytoplasmic) is located at residue C505.

In terms of tissue distribution, component of the acid-insoluble and acid-soluble organic matrix of the aragonitic skeleton (at protein level).

It is found in the membrane. This is an uncharacterized protein from Acropora millepora (Staghorn coral).